The following is a 434-amino-acid chain: Tol-Pal system protein TolB (434 aa).

A signal peptide spans 1 to 21 (MTVRRALALAALALAVSPALA). The segment at 411 to 434 (GDRQTPVTSGKTDLAAPAWGPLAP) is disordered.

This sequence belongs to the TolB family. In terms of assembly, the Tol-Pal system is composed of five core proteins: the inner membrane proteins TolA, TolQ and TolR, the periplasmic protein TolB and the outer membrane protein Pal. They form a network linking the inner and outer membranes and the peptidoglycan layer.

Its subcellular location is the periplasm. Its function is as follows. Part of the Tol-Pal system, which plays a role in outer membrane invagination during cell division and is important for maintaining outer membrane integrity. In Anaeromyxobacter dehalogenans (strain 2CP-1 / ATCC BAA-258), this protein is Tol-Pal system protein TolB.